A 361-amino-acid polypeptide reads, in one-letter code: dTDP-glucose 4,6-dehydratase (361 aa).

Residues 11-12 (FI), 32-35 (DKLT), 58-59 (DI), 80-84 (LAAES), and threonine 99 contribute to the NAD(+) site. Serine 84 provides a ligand contact to substrate. Threonine 133 is a binding site for substrate. Aspartate 134 functions as the Proton donor in the catalytic mechanism. Catalysis depends on proton acceptor residues glutamate 135 and tyrosine 167. NAD(+) is bound at residue 167–171 (YSASK). Asparagine 196 provides a ligand contact to substrate. Asparagine 197 is an NAD(+) binding site. Residues 206–207 (KL), 222–224 (PIY), arginine 231, asparagine 266, and 296–300 (DRPGH) contribute to the substrate site.

Belongs to the NAD(P)-dependent epimerase/dehydratase family. dTDP-glucose dehydratase subfamily. Homodimer. The cofactor is NAD(+).

The catalysed reaction is dTDP-alpha-D-glucose = dTDP-4-dehydro-6-deoxy-alpha-D-glucose + H2O. The protein operates within carbohydrate biosynthesis; dTDP-L-rhamnose biosynthesis. It functions in the pathway bacterial outer membrane biogenesis; LPS O-antigen biosynthesis. Its function is as follows. Catalyzes the dehydration of dTDP-D-glucose to form dTDP-6-deoxy-D-xylo-4-hexulose via a three-step process involving oxidation, dehydration and reduction. The sequence is that of dTDP-glucose 4,6-dehydratase (rfbB) from Escherichia coli.